The sequence spans 950 residues: Kinase suppressor of Ras 2 (950 aa).

Residues 239 to 296 (PPLESGHRSLPPSPRQRHAVRTPPRTPNIVTTVTPPGTPPMRKKNKLKPPGTPPPSSR) are disordered. Over residues 259 to 273 (RTPPRTPNIVTTVTP) the composition is skewed to low complexity. Phosphothreonine is present on residues Thr-272 and Thr-276. A Phorbol-ester/DAG-type zinc finger spans residues 412–456 (KHRFSTKYWMSQTCTVCGKGMLFGLKCKNCKLKCHNKCTKEAPPC). The Zn(2+) site is built by His-413, Cys-425, Cys-428, Cys-438, Cys-441, His-446, Cys-449, and Cys-456. Ser-474 is subject to Phosphoserine; by MARK3. Thr-497 is modified (phosphothreonine). Positions 498–556 (LPKTNKINKDHIPVPYQPDSSSNPSSTTSSTPSSPAPPLPPSATPPSPLHPSPQCTRQQ) are disordered. Positions 517–530 (SSSNPSSTTSSTPS) are enriched in low complexity. A compositionally biased stretch (pro residues) spans 531–548 (SPAPPLPPSATPPSPLHP). Residues 666–931 (LEIGELIGKG…TKLMDMLEKL (266 aa)) enclose the Protein kinase domain. Residue 672–680 (IGKGRFGQV) coordinates ATP. Asp-786 serves as the catalytic Proton donor/acceptor. ATP-binding residues include Lys-788 and Asp-803.

It belongs to the protein kinase superfamily. TKL Ser/Thr protein kinase family. Heterodimerizes (via N-terminus) with BRAF (via N-terminus) in a MAP2K1/MEK1-dependent manner. Interacts with BRAF; this increases the low intrinsic protein kinase activity of KSR2. Interacts with MAP2K1, forming a heterodimer that can dimerize to form a heterotetramer. Interacts with MAP3K8, MAPK, RAS and RAF. Post-translationally, phosphorylated on Ser-474 by MARK3. Mainly expressed in brain and kidney.

The protein localises to the cytoplasm. Its subcellular location is the membrane. It carries out the reaction L-seryl-[protein] + ATP = O-phospho-L-seryl-[protein] + ADP + H(+). It catalyses the reaction L-threonyl-[protein] + ATP = O-phospho-L-threonyl-[protein] + ADP + H(+). Its activity is regulated as follows. Kinase activity is inhibited by ASC24. Its function is as follows. Location-regulated scaffold connecting MEK to RAF. Has very low protein kinase activity and can phosphorylate MAP2K1 at several Ser and Thr residues with very low efficiency (in vitro). Acts as MAP2K1/MEK1-dependent allosteric activator of BRAF; upon binding to MAP2K1/MEK1, dimerizes with BRAF and promotes BRAF-mediated phosphorylation of MAP2K1/MEK1. Interaction with BRAF enhances KSR2-mediated phosphorylation of MAP2K1 (in vitro). Blocks MAP3K8 kinase activity and MAP3K8-mediated signaling. Acts as a negative regulator of MAP3K3-mediated activation of ERK, JNK and NF-kappa-B pathways, inhibiting MAP3K3-mediated interleukin-8 production. This chain is Kinase suppressor of Ras 2, found in Homo sapiens (Human).